The primary structure comprises 141 residues: HTH-type transcriptional repressor NsrR (141 aa).

An HTH rrf2-type domain is found at 2–129 (QLTSFTDYGL…DNYTLADLVE (128 aa)). Positions 28–51 (ISEVTDVYGVSRNHMVKIINQLSR) form a DNA-binding region, H-T-H motif. Residues cysteine 91, cysteine 96, and cysteine 102 each contribute to the [2Fe-2S] cluster site.

[2Fe-2S] cluster serves as cofactor.

Functionally, nitric oxide-sensitive repressor of genes involved in protecting the cell against nitrosative stress. May require iron for activity. This is HTH-type transcriptional repressor NsrR from Escherichia coli O127:H6 (strain E2348/69 / EPEC).